We begin with the raw amino-acid sequence, 399 residues long: Phospholipase C (399 aa).

Positions 1–28 (MNKKKILKFICSAVLSFTLFSGYKSYAW) are cleaved as a signal peptide. Zn(2+)-binding residues include Trp-28, His-38, Asp-83, His-95, His-153, Asp-157, His-163, His-175, and Glu-179. Positions 29–277 (DGKVDGTGTH…NEVSGTINTT (249 aa)) constitute a Zn-dependent PLC domain. The segment at 275 to 282 (NTTENSKI) is linker. In terms of domain architecture, PLAT spans 283–399 (NEIMVVIKTA…DNKTFYINNK (117 aa)). Residues Gly-298, Thr-299, Asp-300, Asp-320, Asn-321, Gly-323, Asn-324, Asp-325, and Asp-363 each contribute to the Ca(2+) site.

The protein belongs to the bacterial zinc-metallophospholipase C family. The cofactor is Ca(2+). Zn(2+) is required as a cofactor.

It is found in the secreted. It carries out the reaction a 1,2-diacyl-sn-glycero-3-phosphocholine + H2O = phosphocholine + a 1,2-diacyl-sn-glycerol + H(+). Functionally, bacterial hemolysins are exotoxins that attack blood cell membranes and cause cell rupture. Binds to eukaryotic membranes where it hydrolyzes phosphatidylcholine, sphingomyelin and phosphatidylethanolamine. The diacylglycerol produced can activate both the arachidonic acid pathway, leading to modulation of the inflammatory response cascade and thrombosis, and protein kinase C, leading to activation of eukaryotic phospholipases and further membrane damage. The sequence is that of Phospholipase C (plc) from Clostridium haemolyticum.